A 208-amino-acid chain; its full sequence is LexA repressor (208 aa).

Positions 29–49 form a DNA-binding region, H-T-H motif; the sequence is VREICSAVGLSSTSTVHGHIS. Active-site for autocatalytic cleavage activity residues include Ser-129 and Lys-167.

Belongs to the peptidase S24 family. In terms of assembly, homodimer.

The enzyme catalyses Hydrolysis of Ala-|-Gly bond in repressor LexA.. Represses a number of genes involved in the response to DNA damage (SOS response), including recA and lexA. In the presence of single-stranded DNA, RecA interacts with LexA causing an autocatalytic cleavage which disrupts the DNA-binding part of LexA, leading to derepression of the SOS regulon and eventually DNA repair. This is LexA repressor from Limosilactobacillus reuteri (strain DSM 20016) (Lactobacillus reuteri).